The chain runs to 183 residues: Large ribosomal subunit protein mL43 (183 aa).

Disordered stretches follow at residues 120-144 and 162-183; these read HTDN…TGCG and PGAL…AQAE. Residues 122 to 139 are compositionally biased toward polar residues; it reads DNPSIQGQWTPSPTNGLP. Positions 162-172 are enriched in basic and acidic residues; sequence PGALDRERDRI.

It belongs to the mitochondrion-specific ribosomal protein mL43 family. Component of the mitochondrial ribosome large subunit (39S) which comprises a 16S rRNA and about 50 distinct proteins. As to expression, ubiquitous with the highest levels in the liver, heart and kidneys. The skeletal muscle, brain and testis showed lower but detectable expression. Expression is coregulated with TWNK.

The protein resides in the mitochondrion. This chain is Large ribosomal subunit protein mL43 (Mrpl43), found in Mus musculus (Mouse).